A 398-amino-acid polypeptide reads, in one-letter code: Glycerol-3-phosphate dehydrogenase [NAD(+)] 1 (398 aa).

Residues Gly50–Gly55, Phe138, Lys161, and Ala194 each bind NAD(+). A substrate-binding site is contributed by Lys161. The active-site Proton acceptor is Lys253. Arg318 and Gln350 together coordinate NAD(+). Arg318–Asn319 provides a ligand contact to substrate.

It belongs to the NAD-dependent glycerol-3-phosphate dehydrogenase family.

It localises to the cytoplasm. It carries out the reaction sn-glycerol 3-phosphate + NAD(+) = dihydroxyacetone phosphate + NADH + H(+). This Yarrowia lipolytica (strain CLIB 122 / E 150) (Yeast) protein is Glycerol-3-phosphate dehydrogenase [NAD(+)] 1 (GPD1).